The following is a 313-amino-acid chain: HTH-type transcriptional regulator CysB (313 aa).

Residues 1 to 59 enclose the HTH lysR-type domain; that stretch reads MNLHQFRFVREAVRQNFNLTEAAKALYTSQPGVSKAIIELEDELGVEIFTRHGKRVRSL. The segment at residues 19–38 is a DNA-binding region (H-T-H motif); sequence LTEAAKALYTSQPGVSKAII.

This sequence belongs to the LysR transcriptional regulatory family.

In terms of biological role, transcriptional regulator preferentially involved in the control of sulfate transport and reduction. Binds to DNA at target promoter regions. This chain is HTH-type transcriptional regulator CysB, found in Burkholderia cenocepacia (strain ATCC BAA-245 / DSM 16553 / LMG 16656 / NCTC 13227 / J2315 / CF5610) (Burkholderia cepacia (strain J2315)).